The primary structure comprises 312 residues: MSAEVETSEGVDEPEEKNFGENHIRMADLSELLKEGTKEAHDRAENTKFVKDFLKGNIKKEIFKLATTALYFTYSALEEEMDRNKDHPAFAPLYFPMELHRKEALTKDMEYFFGENWEEQVQCSEAAQKYVERIHYIGQNEPELLVAHAYTRYMGDLSGGQVLKKVAQRALKLPSTGEGTQFYLFENVDNAQQFKQFYRARMNALDLNLKTKERIVEEANKAFEYNMQIFSELDQAGSAPASETVEDRIPVHDGKGDVRKCPYYAAGQVNGALEGSSCPFRAAMAVLRKPSLQLVLAAAVALAAGLLAWYYM.

S2 is modified (N-acetylserine). A Phosphoserine modification is found at S2. H41 contributes to the heme b binding site. HRM repeat units follow at residues 260 to 265 and 277 to 282; these read KCPYYA and SCPFRA. C261 and C278 each carry S-nitrosocysteine.

This sequence belongs to the heme oxygenase family. Post-translationally, S-nitrosylated by BLVRB.

The protein resides in the microsome. It is found in the endoplasmic reticulum. The catalysed reaction is heme b + 3 reduced [NADPH--hemoprotein reductase] + 3 O2 = biliverdin IXalpha + CO + Fe(2+) + 3 oxidized [NADPH--hemoprotein reductase] + 3 H2O + H(+). Its function is as follows. Heme oxygenase cleaves the heme ring at the alpha methene bridge to form biliverdin. Biliverdin is subsequently converted to bilirubin by biliverdin reductase. Under physiological conditions, the activity of heme oxygenase is highest in the spleen, where senescent erythrocytes are sequestrated and destroyed. Heme oxygenase 2 could be implicated in the production of carbon monoxide in brain where it could act as a neurotransmitter. This chain is Heme oxygenase 2 (HMOX2), found in Oryctolagus cuniculus (Rabbit).